A 73-amino-acid chain; its full sequence is MKTLCFLLLTSGLLYLMVKGVGSHPGTFHVRIKCMPKMTAVFGDNCSFYSSMGDLCNNTKSVCCMVPVRMDNI.

Residues 1–23 form the signal peptide; it reads MKTLCFLLLTSGLLYLMVKGVGS. Disulfide bonds link C34-C63 and C46-C64.

This sequence belongs to the beta-defensin family. In terms of tissue distribution, highly expressed in prostate. Not expressed in uterus, epididymis, ovary, testis, spleen, submaxillary gland, thymus, thyroid, pancreas, smooth muscle, skeletal muscle, heart, kidney, lung, liver, eye and brain.

The protein localises to the secreted. Its function is as follows. Has bactericidal activity. This is Beta-defensin 50 (Defb50) from Mus musculus (Mouse).